A 120-amino-acid polypeptide reads, in one-letter code: uncharacterized protein (120 aa).

It is found in the cytoplasm. The protein localises to the nucleus. This is an uncharacterized protein from Schizosaccharomyces pombe (strain 972 / ATCC 24843) (Fission yeast).